The chain runs to 314 residues: uncharacterized protein (314 aa).

A run of 10 helical transmembrane segments spans residues 4 to 23 (FFIG…YFSG), 36 to 53 (FNKL…FVSI), 68 to 90 (TLVS…YKFF), 97 to 116 (AAVC…GFAV), 131 to 153 (VAII…LNPS), 174 to 196 (PVVW…PAAW), 200 to 222 (FNLI…LAAH), 229 to 251 (EIAY…VGMA), 261 to 283 (MMVL…RFNV), and 290 to 309 (ASLA…WIYV).

The protein belongs to the auxin efflux carrier (TC 2.A.69) family.

Its subcellular location is the cell membrane. This is an uncharacterized protein from Escherichia coli O157:H7.